The primary structure comprises 137 residues: NADH-quinone oxidoreductase subunit A 2 (137 aa).

3 helical membrane passes run 12–32 (WGFA…LGVS), 66–86 (FYLV…LFAW), and 95–115 (WAGL…LVYL).

The protein belongs to the complex I subunit 3 family. As to quaternary structure, NDH-1 is composed of 13 different subunits. Subunits NuoA, H, J, K, L, M, N constitute the membrane sector of the complex.

It localises to the cell inner membrane. The enzyme catalyses a quinone + NADH + 5 H(+)(in) = a quinol + NAD(+) + 4 H(+)(out). NDH-1 shuttles electrons from NADH, via FMN and iron-sulfur (Fe-S) centers, to quinones in the respiratory chain. The immediate electron acceptor for the enzyme in this species is believed to be ubiquinone. Couples the redox reaction to proton translocation (for every two electrons transferred, four hydrogen ions are translocated across the cytoplasmic membrane), and thus conserves the redox energy in a proton gradient. In Pseudomonas aeruginosa (strain ATCC 15692 / DSM 22644 / CIP 104116 / JCM 14847 / LMG 12228 / 1C / PRS 101 / PAO1), this protein is NADH-quinone oxidoreductase subunit A 2.